The chain runs to 805 residues: Leucine--tRNA ligase (805 aa).

Positions 41-52 (PYPSGAGLHVGH) match the 'HIGH' region motif. The 'KMSKS' region motif lies at 577–581 (KMSKS). Lysine 580 lines the ATP pocket.

The protein belongs to the class-I aminoacyl-tRNA synthetase family.

The protein resides in the cytoplasm. The catalysed reaction is tRNA(Leu) + L-leucine + ATP = L-leucyl-tRNA(Leu) + AMP + diphosphate. The sequence is that of Leucine--tRNA ligase from Staphylococcus aureus (strain USA300).